We begin with the raw amino-acid sequence, 373 residues long: Probable pectin lyase C (373 aa).

Residues 1-18 form the signal peptide; that stretch reads MKVPFLQLLCLNAALASA. Cystine bridges form between cysteine 81-cysteine 100 and cysteine 90-cysteine 220. N-linked (GlcNAc...) asparagine glycosylation occurs at asparagine 123. Arginine 250 is an active-site residue. Residues cysteine 316 and cysteine 324 are joined by a disulfide bond.

This sequence belongs to the polysaccharide lyase 1 family.

Its subcellular location is the secreted. It catalyses the reaction Eliminative cleavage of (1-&gt;4)-alpha-D-galacturonan methyl ester to give oligosaccharides with 4-deoxy-6-O-methyl-alpha-D-galact-4-enuronosyl groups at their non-reducing ends.. Pectinolytic enzymes consist of four classes of enzymes: pectin lyase, polygalacturonase, pectin methylesterase and rhamnogalacturonase. Among pectinolytic enzymes, pectin lyase is the most important in depolymerization of pectin, since it cleaves internal glycosidic bonds of highly methylated pectins. This chain is Probable pectin lyase C (pelC), found in Aspergillus niger (strain ATCC MYA-4892 / CBS 513.88 / FGSC A1513).